A 372-amino-acid chain; its full sequence is Probable O-methyltransferase 2 (372 aa).

The S-adenosyl-L-methionine site is built by Gly-216, Asp-259, and Lys-273. The active-site Proton acceptor is His-277.

This sequence belongs to the class I-like SAM-binding methyltransferase superfamily. Cation-independent O-methyltransferase family. COMT subfamily. In terms of assembly, homodimer. As to expression, expressed predominantly in root hairs.

In terms of biological role, O-methyltransferase of unknown substrate specificity. Not active on resorcinol, orcinol, guaiacol, eugenol, ferulic acid, p-coumaric acid, catechol, caffeic acid or monomethyl ethers of resorcinol or orcinol. In Sorghum bicolor (Sorghum), this protein is Probable O-methyltransferase 2 (OMT2).